Here is a 196-residue protein sequence, read N- to C-terminus: UPF0314 protein Oant_0840 (196 aa).

4 helical membrane-spanning segments follow: residues 15–35, 65–85, 127–147, and 151–171; these read WGLG…WLYF, WYTL…TVIA, FGDS…GFLI, and LPTK…LIVI.

The protein belongs to the UPF0314 family.

The protein localises to the cell membrane. The chain is UPF0314 protein Oant_0840 from Brucella anthropi (strain ATCC 49188 / DSM 6882 / CCUG 24695 / JCM 21032 / LMG 3331 / NBRC 15819 / NCTC 12168 / Alc 37) (Ochrobactrum anthropi).